The sequence spans 97 residues: Co-chaperonin GroES (97 aa).

Belongs to the GroES chaperonin family. Heptamer of 7 subunits arranged in a ring. Interacts with the chaperonin GroEL.

The protein resides in the cytoplasm. Its function is as follows. Together with the chaperonin GroEL, plays an essential role in assisting protein folding. The GroEL-GroES system forms a nano-cage that allows encapsulation of the non-native substrate proteins and provides a physical environment optimized to promote and accelerate protein folding. GroES binds to the apical surface of the GroEL ring, thereby capping the opening of the GroEL channel. The polypeptide is Co-chaperonin GroES (Tolumonas auensis (strain DSM 9187 / NBRC 110442 / TA 4)).